The sequence spans 414 residues: 11-beta-hydroxysteroid dehydrogenase type 2 (414 aa).

The next 4 membrane-spanning stretches (helical) occupy residues 3–23, 26–46, 52–72, and 341–361; these read DFAV…GGAV, FLAF…ATLL, ALCM…WLYF, and YYAG…PLSI. Positions 382–414 are disordered; the sequence is KQQGLSPNDNNNSIKENMNDSSSNNSNFTKCID. Over residues 384–397 the composition is skewed to polar residues; the sequence is QGLSPNDNNNSIKE.

The protein belongs to the short-chain dehydrogenases/reductases (SDR) family. In terms of tissue distribution, broadly expressed in peripheral (brain, gill, eye, heart, liver, head kidney, posterior kidney, and gut).

The protein resides in the membrane. It carries out the reaction an 11beta-hydroxysteroid + NAD(+) = an 11-oxosteroid + NADH + H(+). It catalyses the reaction cortisol + NAD(+) = cortisone + NADH + H(+). The enzyme catalyses corticosterone + NAD(+) = 11-dehydrocorticosterone + NADH + H(+). The catalysed reaction is 11beta,17beta-dihydroxyandrost-4-ene-3-one + NAD(+) = 17beta-hydroxyandrost-4-ene-3,11-dione + NADH + H(+). It carries out the reaction 11beta-hydroxyandrost-4-ene-3,17-dione + NAD(+) = androst-4-ene-3,11,17-trione + NADH + H(+). The protein operates within steroid metabolism. Its function is as follows. Catalyzes the conversion of biologically active 11beta-hydroxyglucocorticoids (11beta-hydroxysteroid) such as cortisol, to inactive 11-ketoglucocorticoids (11-oxosteroid) such as cortisone, in the presence of NAD(+). Cortisol is the primary glucocorticoid in teleosts and is released to increase glucose bioavailability in order to meet the increased energy demands in response to stress. Functions as a dehydrogenase (oxidase), thereby decreasing the concentration of active glucocorticoids, regulating the hypothalamus-pituitary-interrenal (HPI) axis function in adult fish. Decreasing the excess glucocorticoids may be of relevance to brain function and neural proliferation. Plays a key role by catalyzing the oxidation of 11beta-hydroxytestosterone (11beta,17beta-dihydroxyandrost-4-ene-3-one) to 11-ketotestosterone (17beta-hydroxyandrost-4-ene-3,11-dione), the major fish androgen, that activates androgen receptor transcriptional activity. Catalyzes the conversion of 11beta-hydroxyandrostenedione (11beta-hydroxyandrost-4-ene-3,17-dione) to 11-ketoandrostenedione (androst-4-ene-3,11,17-trione), which can be further metabolized to 11-ketotestosterone. Exerts a dual role in fish by inactivating glucocorticoids and activating androgens. This is 11-beta-hydroxysteroid dehydrogenase type 2 (hsd11b2) from Danio rerio (Zebrafish).